We begin with the raw amino-acid sequence, 266 residues long: Large ribosomal subunit protein uL2m (266 aa).

It belongs to the universal ribosomal protein uL2 family.

The protein resides in the mitochondrion. This Dictyostelium discoideum (Social amoeba) protein is Large ribosomal subunit protein uL2m (mrpl2).